Here is a 446-residue protein sequence, read N- to C-terminus: Xanthone prenyltransferase A (446 aa).

The dimethylallyl diphosphate site is built by Arg113, Lys199, Tyr201, Arg263, Lys265, Tyr267, Tyr369, and Tyr440.

Belongs to the tryptophan dimethylallyltransferase family.

It participates in secondary metabolite biosynthesis. In terms of biological role, xanthone prenyltransferase involved in the conversion of monodictyphenone to the prenyl xanthones such as emericellin, shamixanthone and epishamixanthone. Monodictyphenone is first converted to variecoxanthone A via a paeciloxanthone intermediate by the consecutive actions of the FAD-dependent monooxygenase mdpD and the xanthone prenyltransferase xptB. XptB catalyzes regular O-prenylation at the hydroxy group of C-7 of the xanthone ring. Variecoxanthone A is further prenylated to emericellin by xptA before being reduced to shamixanthone and epishamixanthone by the dehydrogenase xptC. In Emericella nidulans (strain FGSC A4 / ATCC 38163 / CBS 112.46 / NRRL 194 / M139) (Aspergillus nidulans), this protein is Xanthone prenyltransferase A.